The primary structure comprises 784 residues: PWWP domain-containing protein 2A (784 aa).

Disordered regions lie at residues 1–32 (MAAVAGAPGPGEGGESEQDSETIPGERRLGRL), 244–272 (KPVESIQEESKSFHEEPLVKSEENSPEDV), 463–567 (AKEK…EMQD), and 605–654 (SSSA…SSKE). A compositionally biased stretch (basic and acidic residues) spans 244–266 (KPVESIQEESKSFHEEPLVKSEE). Positions 536 to 556 (TRYSATRSAGETPSEIQSPSN) are enriched in polar residues. Residues 605–614 (SSSASVCSSD) show a composition bias toward low complexity. One can recognise a PWWP domain in the interval 684–744 (VGDIVWAKIY…LSQLTPFLEN (61 aa)).

Its subcellular location is the nucleus. In terms of biological role, H2A.Z-specific chromatin binding protein which plays an important role in the neural crest cell differentiation and/or migration during early development and is essential for the development of the head and eye. Acts as an adapter between distinct nucleosome components (H3K36me3 or H2A.Z) and chromatin-modifying complexes, contributing to the regulation of the levels of histone acetylation at actively transcribed genes. This chain is PWWP domain-containing protein 2A (pwwp2a), found in Xenopus tropicalis (Western clawed frog).